We begin with the raw amino-acid sequence, 343 residues long: Olfactory receptor 6K6 (343 aa).

Over 1 to 53 (MKQYSVGNQHSNYRSLLFPFLCSQMTQLTASGNQTMVTEFLFSMFPHAHRGGL) the chain is Extracellular. N-linked (GlcNAc...) asparagine glycosylation occurs at Asn33. The chain crosses the membrane as a helical span at residues 54–74 (LFFIPLLLIYGFILTGNLIMF). Topologically, residues 75–82 (IVIQVGMA) are cytoplasmic. Residues 83–103 (LHTPLYFFISVLSFLEICYTT) form a helical membrane-spanning segment. Over 104–127 (TTIPKMLSCLISEQKSISVAGCLL) the chain is Extracellular. Cys125 and Cys217 are disulfide-bonded. Residues 128-148 (QMYFFHSLGITESCVLTAMAI) traverse the membrane as a helical segment. The Cytoplasmic portion of the chain corresponds to 149–167 (DRYIAICNPLRYPTIMIPK). A helical transmembrane segment spans residues 168–188 (LCIQLTVGSCFCGFLLVLPEI). Residues 189–224 (AWISTLPFCGSNQIHQIFCDFTPVLSLACTDTFLVV) lie on the Extracellular side of the membrane. Residues 225–244 (IVDAIHAAEIVASFLVIALS) form a helical membrane-spanning segment. The Cytoplasmic segment spans residues 245 to 264 (YIRIIIVILGMHSAEGHHKA). A helical transmembrane segment spans residues 265–285 (FSTCAAHLAVFLLFFGSVAVM). The Extracellular portion of the chain corresponds to 286 to 298 (YLRFSATYSVFWD). A helical membrane pass occupies residues 299-319 (TAIAVTFVILAPFFNPIIYSL). Residues 320–343 (KNKDMKEAIGRLFHYQKRAGWAGK) lie on the Cytoplasmic side of the membrane.

Belongs to the G-protein coupled receptor 1 family.

Its subcellular location is the cell membrane. Odorant receptor. In Homo sapiens (Human), this protein is Olfactory receptor 6K6 (OR6K6).